Here is a 478-residue protein sequence, read N- to C-terminus: Amino acid oxidase imqH (478 aa).

Positions Met-1 to Ala-22 are cleaved as a signal peptide. FAD-binding residues include Val-14, Phe-15, Asp-38, Asn-53, Ala-57, Asn-58, Arg-63, and Ile-64. N-linked (GlcNAc...) asparagine glycosylation is found at Asn-97 and Asn-167. FAD is bound at residue Val-208. Cys-399 is subject to S-8alpha-FAD cysteine. Residues Phe-432 and Lys-433 each contribute to the FAD site.

The protein belongs to the MSOX/MTOX family. In terms of assembly, dimer. The cofactor is FAD.

Its pathway is secondary metabolite biosynthesis. Nonribosomal peptide synthetase; part of the gene cluster that mediates the biosynthesis of imizoquins A to D, tripeptide-derived alkaloids that serve a protective role against oxidative stress that are essential for normal germination. ImqB is a canonical three-module NRPS that assembles the tripeptide backbone of the imizoquins via condensation of Trp, Tyr, and Leu-derived precursors. N-methylation by imqF and phenol oxidation by imqC, followed by cyclization via the FAD-dependent oxidase imqH carry out the three-step transformation of L-tyrosine into tetrahydroisoquinoline. Importantly, this sequence requires the presence of a free amine in the tyrosine moiety, indicating that isoquinoline formation occurs prior to peptide bond formation. The imidazolidin-4-one ring of imizoquins could form following additional oxidation of the methyl-derived bridgehead carbon by imqH. Lastly, O-methylation by imqG and leucine hydroxylation by imqE complete biosynthesis of the imizoquins. The protein is Amino acid oxidase imqH of Aspergillus flavus (strain ATCC 200026 / FGSC A1120 / IAM 13836 / NRRL 3357 / JCM 12722 / SRRC 167).